Reading from the N-terminus, the 99-residue chain is Plastocyanin (99 aa).

The Plastocyanin-like domain occupies 1–99; it reads IEVLLGGDDG…AGMVGKVTVN (99 aa). Residues histidine 37, cysteine 84, histidine 87, and methionine 92 each coordinate Cu cation.

Belongs to the plastocyanin family. The cofactor is Cu(2+).

It is found in the plastid. It localises to the chloroplast thylakoid membrane. In terms of biological role, participates in electron transfer between P700 and the cytochrome b6-f complex in photosystem I. The chain is Plastocyanin (PETE) from Cucurbita pepo (Vegetable marrow).